Reading from the N-terminus, the 928-residue chain is Isoleucine--tRNA ligase (928 aa).

Residues 57-67 (PFANGNIHMGH) carry the 'HIGH' region motif. Glu552 lines the L-isoleucyl-5'-AMP pocket. The 'KMSKS' region motif lies at 593-597 (KMSKS). Lys596 is an ATP binding site. Zn(2+) is bound by residues Cys887, Cys890, Cys907, and Cys910.

The protein belongs to the class-I aminoacyl-tRNA synthetase family. IleS type 1 subfamily. As to quaternary structure, monomer. The cofactor is Zn(2+).

The protein resides in the cytoplasm. It carries out the reaction tRNA(Ile) + L-isoleucine + ATP = L-isoleucyl-tRNA(Ile) + AMP + diphosphate. Functionally, catalyzes the attachment of isoleucine to tRNA(Ile). As IleRS can inadvertently accommodate and process structurally similar amino acids such as valine, to avoid such errors it has two additional distinct tRNA(Ile)-dependent editing activities. One activity is designated as 'pretransfer' editing and involves the hydrolysis of activated Val-AMP. The other activity is designated 'posttransfer' editing and involves deacylation of mischarged Val-tRNA(Ile). The chain is Isoleucine--tRNA ligase from Lacticaseibacillus casei (strain BL23) (Lactobacillus casei).